A 196-amino-acid chain; its full sequence is Lipoprotein signal peptidase (196 aa).

3 consecutive transmembrane segments (helical) span residues 43–63 (LMLKVTSILNMVYTWNYGISF), 75–95 (AIFLITNMIIVCYLYHLMICS), and 97–117 (TIGSFVGYNFVIGGAIGNLID). Catalysis depends on residues Asp126 and Asp144. A helical membrane pass occupies residues 135–155 (YSFPVFNLADCFITLGVIILI).

This sequence belongs to the peptidase A8 family.

Its subcellular location is the cell inner membrane. The catalysed reaction is Release of signal peptides from bacterial membrane prolipoproteins. Hydrolyzes -Xaa-Yaa-Zaa-|-(S,diacylglyceryl)Cys-, in which Xaa is hydrophobic (preferably Leu), and Yaa (Ala or Ser) and Zaa (Gly or Ala) have small, neutral side chains.. Its pathway is protein modification; lipoprotein biosynthesis (signal peptide cleavage). In terms of biological role, this protein specifically catalyzes the removal of signal peptides from prolipoproteins. This Rickettsia typhi (strain ATCC VR-144 / Wilmington) protein is Lipoprotein signal peptidase.